The following is a 90-amino-acid chain: Putative defensin-like protein 243 (90 aa).

The N-terminal stretch at 1–19 is a signal peptide; that stretch reads MKVEVIFLASCVLFSLIHA. 4 cysteine pairs are disulfide-bonded: Cys33-Cys88, Cys43-Cys72, Cys53-Cys82, and Cys70-Cys84.

This sequence belongs to the DEFL family.

It is found in the secreted. This Arabidopsis thaliana (Mouse-ear cress) protein is Putative defensin-like protein 243 (SCRL9).